Reading from the N-terminus, the 543-residue chain is Zinc finger protein 852 (543 aa).

The KRAB domain maps to 8 to 82 (VAYEDLSEDY…TSGGLFGVVP (75 aa)). Ser-145 is subject to Phosphoserine. 12 consecutive C2H2-type zinc fingers follow at residues 159–181 (YRCD…RRIH), 187–209 (YECN…LRTH), 215–237 (YECS…QRLH), 243–265 (YKCN…QRTH), 271–293 (YECK…QFLH), 299–321 (YKCN…QRTH), 327–349 (YKCN…QSLH), 355–377 (YKCS…ERIH), 383–405 (FKCS…QRLH), 411–433 (YKCN…QRIH), 439–461 (YECN…QRTH), and 467–489 (YKCN…QRVH).

The protein belongs to the krueppel C2H2-type zinc-finger protein family.

The protein resides in the nucleus. Functionally, may be involved in transcriptional regulation. This Homo sapiens (Human) protein is Zinc finger protein 852 (ZNF852).